Here is a 177-residue protein sequence, read N- to C-terminus: Translation initiation factor IF-3 (177 aa).

It belongs to the IF-3 family. As to quaternary structure, monomer.

It is found in the cytoplasm. IF-3 binds to the 30S ribosomal subunit and shifts the equilibrium between 70S ribosomes and their 50S and 30S subunits in favor of the free subunits, thus enhancing the availability of 30S subunits on which protein synthesis initiation begins. The sequence is that of Translation initiation factor IF-3 from Elusimicrobium minutum (strain Pei191).